The following is a 331-amino-acid chain: Phosphatidylinositol transfer protein 4 (331 aa).

This sequence belongs to the PtdIns transfer protein family. PI transfer class IIA subfamily.

In terms of biological role, catalyzes the transfer of PtdIns and phosphatidylcholine between membranes. The sequence is that of Phosphatidylinositol transfer protein 4 (pitD) from Dictyostelium discoideum (Social amoeba).